A 427-amino-acid polypeptide reads, in one-letter code: Kallistatin (427 aa).

A signal peptide spans M1 to G20. N-linked (GlcNAc...) asparagine glycans are attached at residues N33, N108, and N157. A glycan (N-linked (GlcNAc...) (complex) asparagine) is linked at N238.

The protein belongs to the serpin family. In terms of assembly, monomer and some homodimers. Post-translationally, the N-terminus is blocked. In terms of tissue distribution, expressed by the liver and secreted in plasma.

The protein resides in the secreted. Functionally, inhibits human amidolytic and kininogenase activities of tissue kallikrein. Inhibition is achieved by formation of an equimolar, heat- and SDS-stable complex between the inhibitor and the enzyme, and generation of a small C-terminal fragment of the inhibitor due to cleavage at the reactive site by tissue kallikrein. In Homo sapiens (Human), this protein is Kallistatin (SERPINA4).